Here is a 602-residue protein sequence, read N- to C-terminus: ATP-dependent DNA helicase XPD (602 aa).

The Helicase ATP-binding domain occupies 1–247 (MQKSYGVALE…DLIEMIRSAL (247 aa)). 11 to 18 (SPTGSGKT) is an ATP binding site. [4Fe-4S] cluster is bound by residues C74, C95, C110, and C146. The DEAH box motif lies at 193–196 (DEAH). One can recognise a Helicase C-terminal domain in the interval 421–602 (VIEDIILKVK…SAQAREKYGA (182 aa)). SsDNA contacts are provided by W531 and R566.

The protein belongs to the helicase family. RAD3/XPD subfamily. In terms of assembly, monomer. It depends on [4Fe-4S] cluster as a cofactor.

The enzyme catalyses Couples ATP hydrolysis with the unwinding of duplex DNA at the replication fork by translocating in the 5'-3' direction. This creates two antiparallel DNA single strands (ssDNA). The leading ssDNA polymer is the template for DNA polymerase III holoenzyme which synthesizes a continuous strand.. It catalyses the reaction ATP + H2O = ADP + phosphate + H(+). Functionally, ATP-dependent 5'-3' DNA helicase. Thought to be involved in nucleotide excision repair (NER) of DNA. This is ATP-dependent DNA helicase XPD from Thermoplasma acidophilum (strain ATCC 25905 / DSM 1728 / JCM 9062 / NBRC 15155 / AMRC-C165).